The following is a 178-amino-acid chain: Nicotinamide-nucleotide adenylyltransferase (178 aa).

The protein belongs to the archaeal NMN adenylyltransferase family.

The protein resides in the cytoplasm. It catalyses the reaction beta-nicotinamide D-ribonucleotide + ATP + H(+) = diphosphate + NAD(+). Its pathway is cofactor biosynthesis; NAD(+) biosynthesis; NAD(+) from nicotinamide D-ribonucleotide: step 1/1. The polypeptide is Nicotinamide-nucleotide adenylyltransferase (Caldivirga maquilingensis (strain ATCC 700844 / DSM 13496 / JCM 10307 / IC-167)).